Reading from the N-terminus, the 716-residue chain is Segment polarity protein dishevelled homolog DVL-3 (716 aa).

The DIX domain maps to 1 to 82 (MGETKIIYHL…RVVSWLVSAE (82 aa)). R27 is modified (omega-N-methylarginine). Phosphoserine occurs at positions 48 and 125. Positions 85-235 (HPEPAPFCAD…VSRIERSSSF (151 aa)) are disordered. Basic and acidic residues predominate over residues 142 to 156 (QRERPRRRDGPEHAA). Residues 175–190 (SSSTLMSSELETTSFF) are compositionally biased toward low complexity. A Phosphoserine modification is found at S192. Low complexity predominate over residues 199-212 (SRFSSSTEQSSASR). R212 is modified (omega-N-methylarginine). A compositionally biased stretch (basic residues) spans 213–226 (LMRRHKRRRRKQKV). A PDZ domain is found at 249–321 (TVTLNMEKYN…NDDAVRVLRE (73 aa)). R271 is subject to Asymmetric dimethylarginine; by PRMT1; alternate. Symmetric dimethylarginine; by PRMT7; alternate is present on residues R271 and R342. R342 carries the post-translational modification Omega-N-methylarginine; alternate. Position 346 is a phosphothreonine (T346). The DEP domain maps to 422-496 (PESGLEVRDR…SEQCYYIFGD (75 aa)). The interval 546–691 (PYNPHPGFPE…PPGRDLASVP (146 aa)) is disordered. Positions 565–581 (ASSQHSEGSRSSGSNRS) are enriched in low complexity. Basic and acidic residues-rich tracts occupy residues 582–595 (GSDR…KAGD) and 604–622 (ESDH…RAPS). R614 carries the post-translational modification Symmetric dimethylarginine; by PRMT7. Composition is skewed to pro residues over residues 653–663 (YGPPGVPPLYG) and 670–682 (TPPP…PGAP). S697 carries the post-translational modification Phosphoserine. Position 698 is an omega-N-methylarginine; alternate (R698). R698 carries the dimethylated arginine; alternate modification. S700 carries the post-translational modification Phosphoserine.

It belongs to the DSH family. In terms of assembly, interacts (via the PDZ domain) with the C-terminal regions of VANGL1 and VANGL2. Interacts (via the region containing both the PDZ and DEP domains) with LRRFIP2; the DIX domain may inhibit this interaction. Interacts with CYLD. Interacts with CEP164 and DAB2. Interacts with DCDC2. Interacts with FOXK1 and FOXK2. Interacts with DAAM2. Post-translationally, ubiquitinated. Deubiquitinated by CYLD, which acts on 'Lys-63'-linked ubiquitin chains. In terms of processing, phosphorylated by CSNK1D. Arginine methylation may function as a switch in regulation of function in Wnt signaling. In terms of tissue distribution, ubiquitous.

The protein resides in the cytoplasm. Involved in the signal transduction pathway mediated by multiple Wnt genes. The chain is Segment polarity protein dishevelled homolog DVL-3 (Dvl3) from Mus musculus (Mouse).